We begin with the raw amino-acid sequence, 182 residues long: MYKWYVVQVFTAQEKKVKKALEDFKESSGMTDFIQEIILPIENVMEVKKGEHKVVEKYIWPGYLLVKMHLTDESWLYVKSTAGIVEFLGGGVPVALSEDEVRSILTDIEEKKSGVVQKHQFEVGSRVKINDGVFVNFIGTVSEVFHDKGRLSVMVSIFGRETRVDDLEFWQVEEVAPGQESE.

The protein belongs to the NusG family.

Its function is as follows. Participates in transcription elongation, termination and antitermination. The chain is Transcription termination/antitermination protein NusG from Chlamydia pneumoniae (Chlamydophila pneumoniae).